The primary structure comprises 342 residues: Autoinducer 2 import system permease protein LsrC (342 aa).

Topologically, residues 1–13 (MLKFIQNNREITA) are periplasmic. The chain crosses the membrane as a helical span at residues 14–34 (LLAVVLLFVLPGFLDRQYLSV). Residues 35–38 (QTLT) lie on the Cytoplasmic side of the membrane. The helical transmembrane segment at 39 to 59 (MVYSSAQILILLAMGATLVML) threads the bilayer. Topologically, residues 60 to 69 (TRNIDVSVGS) are periplasmic. Residues 70–90 (ITGMCAVLLGMLLNAGYSLPV) form a helical membrane-spanning segment. The Cytoplasmic portion of the chain corresponds to 91–92 (AC). Residues 93–113 (VATLLLGLLAGFFNGVLVAWL) form a helical membrane-spanning segment. Lys114 is a topological domain (periplasmic). The chain crosses the membrane as a helical span at residues 115–135 (IPAIVATLGTLGLYRGIMLLW). Topologically, residues 136–154 (TGGKWIEGLPAELKQLSAP) are cytoplasmic. Residues 155 to 175 (LLLGVSAIGWLTIILVAFMAW) traverse the membrane as a helical segment. Topologically, residues 176–212 (LLAKTAFGRSFYATGDNLQGARQLGVRTEAIRIVAFS) are periplasmic. A helical transmembrane segment spans residues 213 to 233 (LNGCMAALAGIVFASQIGFIP). Topologically, residues 234-251 (NQTGTGLEMKAIAACVLG) are cytoplasmic. Residues 252 to 272 (GISLLGGSGAIIGAVLGAWFL) form a helical membrane-spanning segment. Over 273-283 (TQIDSVLVLLR) the chain is Periplasmic. The chain crosses the membrane as a helical span at residues 284-304 (IPAWWNDFIAGLVLLAVLVFD). At 305 to 342 (GRLRCALERNLRRQKYARFMTPPPSVKPASSGKKREAA) the chain is on the cytoplasmic side.

It belongs to the binding-protein-dependent transport system permease family. AraH/RbsC subfamily. As to quaternary structure, the complex is composed of two ATP-binding proteins (LsrA), two transmembrane proteins (LsrC and LsrD) and a solute-binding protein (LsrB).

It is found in the cell inner membrane. Part of the ABC transporter complex LsrABCD involved in autoinducer 2 (AI-2) import. Probably responsible for the translocation of the substrate across the membrane. The sequence is that of Autoinducer 2 import system permease protein LsrC (lsrC) from Escherichia coli (strain K12 / DH10B).